Here is a 62-residue protein sequence, read N- to C-terminus: MDKNRIDGAAKQVKGSVKEAIGRVTGDKSTELEGAAEKNVGKVQRKAGEVADDVRDAVKSTK.

This sequence belongs to the UPF0337 (CsbD) family.

The protein is UPF0337 protein XAC0100 of Xanthomonas axonopodis pv. citri (strain 306).